Consider the following 952-residue polypeptide: Ubiquitin carboxyl-terminal hydrolase 15 (952 aa).

At alanine 2 the chain carries N-acetylalanine. A mediates interaction with SART3 region spans residues 2–223 (AEGGAADLDI…KNEDGTWPRG (222 aa)). Positions 7–118 (ADLDIQRSDI…GQEPIARKVV (112 aa)) constitute a DUSP domain. Phosphothreonine is present on threonine 226. Positions 260-904 (CGLSNLGNTC…AAYVLFYQRQ (645 aa)) constitute a USP domain. Cysteine 269 (nucleophile) is an active-site residue. Position 573 is a phosphothreonine (threonine 573). Residues 598–666 (TEGSLHCCKD…GDNDSENGLC (69 aa)) form a disordered region. The segment covering 627 to 644 (METDEPDDESSQDQELPS) has biased composition (acidic residues). Residue histidine 862 is the Proton acceptor of the active site. A disordered region spans residues 923–952 (SAATGIPLESDEDSNDNDNDIENENCMHTN). The span at 931–945 (ESDEDSNDNDNDIEN) shows a compositional bias: acidic residues. Serine 932 and serine 936 each carry phosphoserine.

Belongs to the peptidase C19 family. In terms of assembly, a homodimer structure has been reported; however it is unclear whether the protein form a homodimer in vivo. Identified in a complex with the COP9 signalosome complex (CSN). Interacts with SMAD1, SMAD2 and SMAD3; the interaction is direct. Forms a complex with SMURF2 and SMAD7. Interacts with TGFBR1. Interacts with SART3; the interaction is direct. May interact with RNF20 and RNF40. May interact with PRKN. Interacts with INCA1. In terms of processing, phosphorylated. Phosphorylation protects against ubiquitination and subsequent degradation by the proteasome. Ubiquitinated, leading to degradation by the proteasome.

The protein resides in the cytoplasm. The protein localises to the nucleus. It localises to the mitochondrion. The enzyme catalyses Thiol-dependent hydrolysis of ester, thioester, amide, peptide and isopeptide bonds formed by the C-terminal Gly of ubiquitin (a 76-residue protein attached to proteins as an intracellular targeting signal).. Its function is as follows. Hydrolase that removes conjugated ubiquitin from target proteins and regulates various pathways such as the TGF-beta receptor signaling, NF-kappa-B and RNF41/NRDP1-PRKN pathways. Acts as a key regulator of TGF-beta receptor signaling pathway, but the precise mechanism is still unclear: according to a report, acts by promoting deubiquitination of monoubiquitinated R-SMADs (SMAD1, SMAD2 and/or SMAD3), thereby alleviating inhibition of R-SMADs and promoting activation of TGF-beta target genes. According to another reports, regulates the TGF-beta receptor signaling pathway by mediating deubiquitination and stabilization of TGFBR1, leading to an enhanced TGF-beta signal. Able to mediate deubiquitination of monoubiquitinated substrates, 'Lys-27'-, 'Lys-48'- and 'Lys-63'-linked polyubiquitin chains. May also regulate gene expression and/or DNA repair through the deubiquitination of histone H2B. Acts as an inhibitor of mitophagy by counteracting the action of parkin (PRKN): hydrolyzes cleavage of 'Lys-48'- and 'Lys-63'-linked polyubiquitin chains attached by parkin on target proteins such as MFN2, thereby reducing parkin's ability to drive mitophagy. Acts as an associated component of COP9 signalosome complex (CSN) and regulates different pathways via this association: regulates NF-kappa-B by mediating deubiquitination of NFKBIA and deubiquitinates substrates bound to VCP. Involved in endosome organization by mediating deubiquitination of SQSTM1: ubiquitinated SQSTM1 forms a molecular bridge that restrains cognate vesicles in the perinuclear region and its deubiquitination releases target vesicles for fast transport into the cell periphery. Acts as a negative regulator of antifungal immunity by mediating 'Lys-27'-linked deubiquitination of CARD9, thereby inactivating CARD9. The sequence is that of Ubiquitin carboxyl-terminal hydrolase 15 (USP15) from Bos taurus (Bovine).